A 347-amino-acid polypeptide reads, in one-letter code: Putative coenzyme F420-dependent oxidoreductase Rv3520c (347 aa).

The polypeptide is Putative coenzyme F420-dependent oxidoreductase Rv3520c (Mycobacterium tuberculosis (strain ATCC 25618 / H37Rv)).